Here is a 263-residue protein sequence, read N- to C-terminus: 5'-nucleotidase SurE (263 aa).

4 residues coordinate a divalent metal cation: Asp-11, Asp-12, Ser-42, and Asn-96.

The protein belongs to the SurE nucleotidase family. It depends on a divalent metal cation as a cofactor.

The protein resides in the cytoplasm. The catalysed reaction is a ribonucleoside 5'-phosphate + H2O = a ribonucleoside + phosphate. In terms of biological role, nucleotidase that shows phosphatase activity on nucleoside 5'-monophosphates. The sequence is that of 5'-nucleotidase SurE from Methanocorpusculum labreanum (strain ATCC 43576 / DSM 4855 / Z).